The following is a 126-amino-acid chain: MPEPAKSAPAPKKGSKKAVTKAQKKDGKKRKRSRKESYSVYVYKVLKRVHPDTGISSKAMGIMNSFVNDIFERIAGEASRLAHYNKRSTITSREIQTAVRLLLPGELAKHAVSEGTKAVTKYTSAK.

Positions 1-12 (MPEPAKSAPAPK) are enriched in low complexity. The tract at residues 1-36 (MPEPAKSAPAPKKGSKKAVTKAQKKDGKKRKRSRKE) is disordered. Proline 2 is modified (N-acetylproline). An ADP-ribosyl glutamic acid modification is found at glutamate 3. Lysine 6 carries the post-translational modification N6-(2-hydroxyisobutyryl)lysine; alternate. At lysine 6 the chain carries N6-(beta-hydroxybutyryl)lysine; alternate. Lysine 6 carries the post-translational modification N6-acetyllysine; alternate. N6-butyryllysine; alternate is present on lysine 6. Lysine 6 bears the N6-crotonyllysine; alternate mark. N6-lactoyllysine; alternate is present on lysine 6. A Glycyl lysine isopeptide (Lys-Gly) (interchain with G-Cter in SUMO2); alternate cross-link involves residue lysine 6. The residue at position 7 (serine 7) is an ADP-ribosylserine. Lysine 12 is subject to N6-(beta-hydroxybutyryl)lysine; alternate. Lysine 12 and lysine 13 each carry N6-acetyllysine; alternate. N6-crotonyllysine; alternate occurs at positions 12 and 13. Lysine 12 is subject to N6-lactoyllysine; alternate. Lysine 13 bears the N6-(2-hydroxyisobutyryl)lysine; alternate mark. Serine 15 carries the post-translational modification Phosphoserine; by STK4/MST1. 4 positions are modified to N6-acetyllysine; alternate: lysine 16, lysine 17, lysine 21, and lysine 24. N6-crotonyllysine; alternate occurs at positions 16, 17, 21, and 24. Lysine 16, lysine 17, lysine 21, and lysine 24 each carry N6-lactoyllysine; alternate. Position 17 is an N6-glutaryllysine; alternate (lysine 17). An N6-(2-hydroxyisobutyryl)lysine; alternate mark is found at lysine 21 and lysine 24. At lysine 21 the chain carries N6-(beta-hydroxybutyryl)lysine; alternate. Lysine 21 carries the post-translational modification N6-butyryllysine; alternate. Residue lysine 21 forms a Glycyl lysine isopeptide (Lys-Gly) (interchain with G-Cter in SUMO2); alternate linkage. At lysine 25 the chain carries N6-(2-hydroxyisobutyryl)lysine. Residue lysine 35 is modified to N6-(2-hydroxyisobutyryl)lysine; alternate. Lysine 35 carries the N6-(beta-hydroxybutyryl)lysine; alternate modification. Residue lysine 35 is modified to N6-crotonyllysine; alternate. Lysine 35 carries the post-translational modification N6-glutaryllysine; alternate. An N6-succinyllysine; alternate modification is found at lysine 35. A Glycyl lysine isopeptide (Lys-Gly) (interchain with G-Cter in ubiquitin); alternate cross-link involves residue lysine 35. The residue at position 36 (glutamate 36) is a PolyADP-ribosyl glutamic acid. Serine 37 bears the Phosphoserine; by AMPK mark. Lysine 44, lysine 47, and lysine 58 each carry N6-(2-hydroxyisobutyryl)lysine; alternate. Residue lysine 44 is modified to N6-lactoyllysine; alternate. An N6-glutaryllysine; alternate mark is found at lysine 44 and lysine 47. The residue at position 47 (lysine 47) is an N6-methyllysine; alternate. Lysine 58 carries the N6,N6-dimethyllysine; alternate modification. Residue arginine 80 is modified to Dimethylated arginine. An N6-(2-hydroxyisobutyryl)lysine; alternate modification is found at lysine 86. Lysine 86 is subject to N6-acetyllysine; alternate. An N6-lactoyllysine; alternate modification is found at lysine 86. Lysine 86 is subject to N6,N6,N6-trimethyllysine; alternate. 2 positions are modified to omega-N-methylarginine: arginine 87 and arginine 93. Position 109 is an N6-(2-hydroxyisobutyryl)lysine; alternate (lysine 109). N6-lactoyllysine; alternate is present on lysine 109. Residue lysine 109 is modified to N6-glutaryllysine; alternate. Lysine 109 is subject to N6-methyllysine; alternate. The O-linked (GlcNAc) serine glycan is linked to serine 113. Phosphothreonine is present on threonine 116. Lysine 117 and lysine 121 each carry N6-(2-hydroxyisobutyryl)lysine; alternate. Residue lysine 117 is modified to N6-(beta-hydroxybutyryl)lysine; alternate. N6-lactoyllysine; alternate is present on residues lysine 117 and lysine 121. 2 positions are modified to N6-glutaryllysine; alternate: lysine 117 and lysine 121. Residues lysine 117 and lysine 121 each carry the N6-succinyllysine; alternate modification. Lysine 117 is subject to N6-methylated lysine; alternate. A Glycyl lysine isopeptide (Lys-Gly) (interchain with G-Cter in ubiquitin); alternate cross-link involves residue lysine 121.

It belongs to the histone H2B family. As to quaternary structure, the nucleosome is a histone octamer containing two molecules each of H2A, H2B, H3 and H4 assembled in one H3-H4 heterotetramer and two H2A-H2B heterodimers. The octamer wraps approximately 147 bp of DNA. Post-translationally, monoubiquitination at Lys-35 (H2BK34Ub) by the MSL1/MSL2 dimer is required for histone H3 'Lys-4' (H3K4me) and 'Lys-79' (H3K79me) methylation and transcription activation at specific gene loci, such as HOXA9 and MEIS1 loci. Similarly, monoubiquitination at Lys-121 (H2BK120Ub) by the RNF20/40 complex gives a specific tag for epigenetic transcriptional activation and is also prerequisite for histone H3 'Lys-4' and 'Lys-79' methylation. It also functions cooperatively with the FACT dimer to stimulate elongation by RNA polymerase II. H2BK120Ub also acts as a regulator of mRNA splicing: deubiquitination by USP49 is required for efficient cotranscriptional splicing of a large set of exons. In terms of processing, phosphorylated on Ser-15 (H2BS14ph) by STK4/MST1 during apoptosis; which facilitates apoptotic chromatin condensation. Also phosphorylated on Ser-15 in response to DNA double strand breaks (DSBs), and in correlation with somatic hypermutation and immunoglobulin class-switch recombination. Phosphorylation at Ser-37 (H2BS36ph) by AMPK in response to stress promotes transcription. GlcNAcylation at Ser-113 promotes monoubiquitination of Lys-121. It fluctuates in response to extracellular glucose, and associates with transcribed genes. Post-translationally, ADP-ribosylated by PARP1 or PARP2 on Ser-7 (H2BS6ADPr) in response to DNA damage. H2BS6ADPr promotes recruitment of CHD1L. Mono-ADP-ribosylated on Glu-3 (H2BE2ADPr) by PARP3 in response to single-strand breaks. Poly ADP-ribosylation on Glu-36 (H2BE35ADPr) by PARP1 regulates adipogenesis: it inhibits phosphorylation at Ser-37 (H2BS36ph), thereby blocking expression of pro-adipogenetic genes. In terms of processing, crotonylation (Kcr) is specifically present in male germ cells and marks testis-specific genes in post-meiotic cells, including X-linked genes that escape sex chromosome inactivation in haploid cells. Crotonylation marks active promoters and enhancers and confers resistance to transcriptional repressors. It is also associated with post-meiotically activated genes on autosomes. Lactylated in macrophages by EP300/P300 by using lactoyl-CoA directly derived from endogenous or exogenous lactate, leading to stimulates gene transcription.

The protein localises to the nucleus. Its subcellular location is the chromosome. In terms of biological role, core component of nucleosome. Nucleosomes wrap and compact DNA into chromatin, limiting DNA accessibility to the cellular machineries which require DNA as a template. Histones thereby play a central role in transcription regulation, DNA repair, DNA replication and chromosomal stability. DNA accessibility is regulated via a complex set of post-translational modifications of histones, also called histone code, and nucleosome remodeling. The polypeptide is Histone H2B type 1-K (Macaca fascicularis (Crab-eating macaque)).